The sequence spans 329 residues: Signal recognition particle receptor FtsY (329 aa).

GTP is bound by residues 127-134 (GVNGVGKT), 209-213 (DTAGR), and 273-276 (TKLD).

This sequence belongs to the GTP-binding SRP family. FtsY subfamily. In terms of assembly, part of the signal recognition particle protein translocation system, which is composed of SRP and FtsY.

It localises to the cell membrane. The protein resides in the cytoplasm. It carries out the reaction GTP + H2O = GDP + phosphate + H(+). Involved in targeting and insertion of nascent membrane proteins into the cytoplasmic membrane. Acts as a receptor for the complex formed by the signal recognition particle (SRP) and the ribosome-nascent chain (RNC). The protein is Signal recognition particle receptor FtsY of Bacillus subtilis (strain 168).